Reading from the N-terminus, the 160-residue chain is 6,7-dimethyl-8-ribityllumazine synthase (160 aa).

5-amino-6-(D-ribitylamino)uracil-binding positions include Phe-22, 57 to 59, and 81 to 83; these read TYE and TII. 86–87 is a binding site for (2S)-2-hydroxy-3-oxobutyl phosphate; that stretch reads QT. His-89 acts as the Proton donor in catalysis. 5-amino-6-(D-ribitylamino)uracil is bound at residue Leu-114. Arg-128 contacts (2S)-2-hydroxy-3-oxobutyl phosphate.

Belongs to the DMRL synthase family. Forms an icosahedral capsid composed of 60 subunits, arranged as a dodecamer of pentamers.

The enzyme catalyses (2S)-2-hydroxy-3-oxobutyl phosphate + 5-amino-6-(D-ribitylamino)uracil = 6,7-dimethyl-8-(1-D-ribityl)lumazine + phosphate + 2 H2O + H(+). Its pathway is cofactor biosynthesis; riboflavin biosynthesis; riboflavin from 2-hydroxy-3-oxobutyl phosphate and 5-amino-6-(D-ribitylamino)uracil: step 1/2. In terms of biological role, catalyzes the formation of 6,7-dimethyl-8-ribityllumazine by condensation of 5-amino-6-(D-ribitylamino)uracil with 3,4-dihydroxy-2-butanone 4-phosphate. This is the penultimate step in the biosynthesis of riboflavin. The chain is 6,7-dimethyl-8-ribityllumazine synthase from Buchnera aphidicola subsp. Acyrthosiphon pisum (strain APS) (Acyrthosiphon pisum symbiotic bacterium).